Reading from the N-terminus, the 426-residue chain is Bifunctional protein GlmU (426 aa).

A pyrophosphorylase region spans residues 1–216 (MSEVDVVILA…WHDILGVNTQ (216 aa)). Residues 9–12 (LAAG), Lys23, and Gln69 contribute to the UDP-N-acetyl-alpha-D-glucosamine site. Asp97 provides a ligand contact to Mg(2+). Gly132, Glu148, Asn163, and Asn214 together coordinate UDP-N-acetyl-alpha-D-glucosamine. Position 214 (Asn214) interacts with Mg(2+). Residues 217–237 (QQLAAVSKIARKRINDQIMAN) are linker. Positions 238–426 (GVTMIDPLTT…AKHDQRDDQP (189 aa)) are N-acetyltransferase. 2 residues coordinate UDP-N-acetyl-alpha-D-glucosamine: Arg286 and Lys304. His316 functions as the Proton acceptor in the catalytic mechanism. Positions 319 and 330 each coordinate UDP-N-acetyl-alpha-D-glucosamine. Acetyl-CoA contacts are provided by residues Ala333, 339–340 (NY), Ser358, Ala376, and Arg393.

The protein in the N-terminal section; belongs to the N-acetylglucosamine-1-phosphate uridyltransferase family. In the C-terminal section; belongs to the transferase hexapeptide repeat family. As to quaternary structure, homotrimer. Mg(2+) is required as a cofactor.

The protein localises to the cytoplasm. The catalysed reaction is alpha-D-glucosamine 1-phosphate + acetyl-CoA = N-acetyl-alpha-D-glucosamine 1-phosphate + CoA + H(+). It catalyses the reaction N-acetyl-alpha-D-glucosamine 1-phosphate + UTP + H(+) = UDP-N-acetyl-alpha-D-glucosamine + diphosphate. Its pathway is nucleotide-sugar biosynthesis; UDP-N-acetyl-alpha-D-glucosamine biosynthesis; N-acetyl-alpha-D-glucosamine 1-phosphate from alpha-D-glucosamine 6-phosphate (route II): step 2/2. It participates in nucleotide-sugar biosynthesis; UDP-N-acetyl-alpha-D-glucosamine biosynthesis; UDP-N-acetyl-alpha-D-glucosamine from N-acetyl-alpha-D-glucosamine 1-phosphate: step 1/1. The protein operates within bacterial outer membrane biogenesis; LPS lipid A biosynthesis. Catalyzes the last two sequential reactions in the de novo biosynthetic pathway for UDP-N-acetylglucosamine (UDP-GlcNAc). The C-terminal domain catalyzes the transfer of acetyl group from acetyl coenzyme A to glucosamine-1-phosphate (GlcN-1-P) to produce N-acetylglucosamine-1-phosphate (GlcNAc-1-P), which is converted into UDP-GlcNAc by the transfer of uridine 5-monophosphate (from uridine 5-triphosphate), a reaction catalyzed by the N-terminal domain. This Oenococcus oeni (strain ATCC BAA-331 / PSU-1) protein is Bifunctional protein GlmU.